The primary structure comprises 619 residues: Probable pectinesterase/pectinesterase inhibitor 25 (619 aa).

Positions 1–23 are cleaved as a signal peptide; the sequence is MKMQTLNFTSSLLFLSFIFLSCA. Residues 31–84 are disordered; the sequence is SPSQPHSEPPSQLPFEPPVESPFFPPSQPPIFVPPSQPPSLPPSQSQSPSLACK. Positions 37-72 are enriched in pro residues; that stretch reads SEPPSQLPFEPPVESPFFPPSQPPIFVPPSQPPSLP. The segment at 73–231 is pectinesterase inhibitor 25; the sequence is PSQSQSPSLA…TRLYSISLGL (159 aa). Asn-220, Asn-255, Asn-312, Asn-325, and Asn-364 each carry an N-linked (GlcNAc...) asparagine glycan. The pectinesterase 25 stretch occupies residues 302–601; the sequence is AVIVGPFKSD…FTVYNFTMGD (300 aa). Residue Thr-380 coordinates substrate. N-linked (GlcNAc...) asparagine glycosylation is present at Asn-382. Gln-410 provides a ligand contact to substrate. Asp-433 (proton donor; for pectinesterase activity) is an active-site residue. A disulfide bond links Cys-447 and Cys-467. Catalysis depends on Asp-454, which acts as the Nucleophile; for pectinesterase activity. N-linked (GlcNAc...) asparagine glycosylation is present at Asn-500. Substrate is bound by residues Arg-522 and Trp-524. 3 N-linked (GlcNAc...) asparagine glycosylation sites follow: Asn-550, Asn-591, and Asn-596.

This sequence in the N-terminal section; belongs to the PMEI family. The protein in the C-terminal section; belongs to the pectinesterase family. In terms of tissue distribution, expressed in siliques.

The protein localises to the secreted. Its subcellular location is the cell wall. The enzyme catalyses [(1-&gt;4)-alpha-D-galacturonosyl methyl ester](n) + n H2O = [(1-&gt;4)-alpha-D-galacturonosyl](n) + n methanol + n H(+). It functions in the pathway glycan metabolism; pectin degradation; 2-dehydro-3-deoxy-D-gluconate from pectin: step 1/5. In terms of biological role, acts in the modification of cell walls via demethylesterification of cell wall pectin. The polypeptide is Probable pectinesterase/pectinesterase inhibitor 25 (PME25) (Arabidopsis thaliana (Mouse-ear cress)).